Here is a 374-residue protein sequence, read N- to C-terminus: Fatty acid conjugase FAC2 A (374 aa).

The next 2 membrane-spanning stretches (helical) occupy residues 50–70 (IIVT…LPGF) and 74–94 (IVWP…WMIG). The short motif at 95–99 (HECGH) is the Histidine box-1 element. The Histidine box-2 signature appears at 131 to 135 (HRNHH). The next 3 helical transmembrane spans lie at 168–188 (MGLM…YIMF), 219–239 (VLFS…IVMV), and 246–266 (FYVY…ATYL). Positions 306 to 310 (HVIHH) match the Histidine box-3 motif.

The protein belongs to the fatty acid desaturase type 1 family. As to expression, expressed exclusively in the developing seeds. Not detected in leaves or flower buds.

It is found in the microsome membrane. The catalysed reaction is a (9Z,12Z)-octadecadienoyl-containing glycerolipid + AH2 + O2 = a (8E,10E,12Z)-octadecatrienoyl-containing glycerolipid + A + 2 H2O. Its pathway is lipid metabolism; polyunsaturated fatty acid biosynthesis. Its function is as follows. Fatty acid conjugase converting 18:2(9Z, 12Z) to calendic acid 18:3(8E, 10E, 12Z). Converts alpha-linolenic acid (18:3(9Z, 12Z, 15Z)) into 18:4(8E, 10E, 12Z, 15Z). Also has weak activity on the mono-unsaturates 16:1(9Z) and 18:1(9Z) producing two conjugated double bonds at delta(8) and delta(10) position. This chain is Fatty acid conjugase FAC2 A, found in Calendula officinalis (Pot marigold).